A 144-amino-acid polypeptide reads, in one-letter code: Cytochrome c-type biogenesis protein CcmE (144 aa).

Topologically, residues 1–7 are cytoplasmic; sequence MTRKQKR. A helical; Signal-anchor for type II membrane protein transmembrane segment spans residues 8 to 28; the sequence is LAVIGSGMGFLALAAALTFYA. At 29-144 the chain is on the periplasmic side; the sequence is LGQQTSYFYM…LKKDGLWQEQ (116 aa). The heme site is built by H122 and Y126.

This sequence belongs to the CcmE/CycJ family.

The protein localises to the cell inner membrane. Its function is as follows. Heme chaperone required for the biogenesis of c-type cytochromes. Transiently binds heme delivered by CcmC and transfers the heme to apo-cytochromes in a process facilitated by CcmF and CcmH. The protein is Cytochrome c-type biogenesis protein CcmE of Chelativorans sp. (strain BNC1).